Reading from the N-terminus, the 335-residue chain is Cytoskeleton protein RodZ (335 aa).

Over 1-111 (MNTEATHDQN…LGKRRKKRDG (111 aa)) the chain is Cytoplasmic. The 53-residue stretch at 19-71 (LRNAREQLGLSQQAVAERLCLKVSTVRDIEEDKAPADLASTFLRGYIRSYARL) folds into the HTH cro/C1-type domain. The H-T-H motif DNA-binding region spans 30–49 (QQAVAERLCLKVSTVRDIEE). Residues 112 to 132 (WLMTFTWLVLFVVIGLSGAWW) form a helical; Signal-anchor for type II membrane protein membrane-spanning segment. At 133–335 (WQDHKAQQEE…TLNAEQSPAQ (203 aa)) the chain is on the periplasmic side. Positions 148-164 (DQSSAELNNNQSQSVPL) are enriched in polar residues. The interval 148–244 (DQSSAELNNN…PLPTDQAGVT (97 aa)) is disordered. 2 stretches are compositionally biased toward low complexity: residues 165–205 (DTST…DPQQ) and 217–239 (DTAATPAPAATTTPDGAAPLPTD).

The protein belongs to the RodZ family.

It localises to the cell inner membrane. Functionally, cytoskeletal protein that is involved in cell-shape control through regulation of the length of the long axis. The polypeptide is Cytoskeleton protein RodZ (Escherichia coli O127:H6 (strain E2348/69 / EPEC)).